A 388-amino-acid chain; its full sequence is uncharacterized protein (388 aa).

The stretch at 68–96 (KVDRMSEEEERMAIATRKAKEVAKELSET) forms a coiled coil. Residues 162–388 (GSHPLVREFN…PPQQDWFDSV (227 aa)) form a disordered region. Basic and acidic residues-rich tracts occupy residues 166-176 (LVREFNGEKPP) and 196-208 (ATDKKTGSKQSDK). Residues 233 to 251 (GVKHQHAIRRDDRHRHGMR) show a composition bias toward basic residues. Composition is skewed to low complexity over residues 265–279 (QQQQCPVQGQQSRGQ) and 293–346 (QRRP…QRPA).

This is an uncharacterized protein from Frog virus 3 (isolate Goorha) (FV-3).